Consider the following 2279-residue polypeptide: Zinc finger protein 318 (2279 aa).

Composition is skewed to low complexity over residues 1–12 (MYRSSARSSVSS) and 25–39 (SGRS…ARRS). Disordered stretches follow at residues 1-140 (MYRS…PGLC) and 164-189 (RRRL…LTDD). An interaction with AR region spans residues 1 to 1092 (MYRSSARSSV…THMHNKKHTQ (1092 aa)). Ser40 carries the post-translational modification Phosphoserine. The segment covering 53–67 (PARRPRSPSGHRGRR) has biased composition (basic residues). Phosphoserine occurs at positions 79 and 81. Residues 110–132 (SRGESRADYARDGRGDHPGDSGS) are compositionally biased toward basic and acidic residues. Residues Ser136 and Ser173 each carry the phosphoserine modification. Residues 177-188 (NLEDMDRDDLTD) are compositionally biased toward acidic residues. Position 205 is a phosphotyrosine (Tyr205). A phosphoserine mark is found at Ser207 and Ser214. Disordered regions lie at residues 279-346 (TVKI…DGGG) and 397-416 (LESF…YSGH). Residues 311-333 (LDPEFRELDLARRKREEEEERSR) are compositionally biased toward basic and acidic residues. A coiled-coil region spans residues 315–343 (FRELDLARRKREEEEERSRSLSQELVGVD). A phosphoserine mark is found at Ser464, Ser472, Ser501, and Ser527. Disordered regions lie at residues 514-533 (LADS…DIED) and 540-570 (GDEE…ASSL). Residues Lys547, Lys553, Lys566, and Lys578 each participate in a glycyl lysine isopeptide (Lys-Gly) (interchain with G-Cter in SUMO2) cross-link. Positions 664-683 (FSADRRSSDPHRLESREAHH) are enriched in basic and acidic residues. The tract at residues 664 to 709 (FSADRRSSDPHRLESREAHHSNTHSPEVSHPHPPSPVDPYLLTKNS) is disordered. Thr842 bears the Phosphothreonine mark. Residues 876–980 (EKISDEKNRA…SELDKVAQIL (105 aa)) adopt a coiled-coil conformation. 2 stretches are compositionally biased toward basic and acidic residues: residues 922 to 941 (QQGE…KDPL) and 989 to 1012 (QKSL…KSPE). Disordered stretches follow at residues 922–942 (QQGE…DPLL) and 989–1051 (QKSL…TKQL). Ser1010 carries the post-translational modification Phosphoserine. Residues 1013–1023 (KVSSFSNSSSN) are compositionally biased toward low complexity. Over residues 1024–1034 (KESKVNNEKFR) the composition is skewed to basic and acidic residues. The residue at position 1037 (Ser1037) is a Phosphoserine. 2 consecutive Matrin-type zinc fingers follow at residues 1063–1097 (AGNH…LDPY) and 1136–1166 (FYCQ…KYKK). 5 stretches are compositionally biased toward basic and acidic residues: residues 1195–1235 (RRQS…KLED), 1242–1251 (NSPEKAENKR), 1258–1267 (QLKEEVKKES), 1279–1288 (KKPEKEEEKS), and 1296–1316 (SKEE…EAGK). Positions 1195 to 1319 (RRQSELKRKL…GKTEAGKAKP (125 aa)) are disordered. Phosphoserine is present on residues Ser1243 and Ser1267. Ser1420 carries the phosphoserine modification. Disordered stretches follow at residues 1428–1463 (AEKS…HPAA), 1577–1628 (GKGA…EELH), 1702–1735 (SSFQ…PPQL), and 1753–1775 (ESVN…ESEI). The span at 1440-1462 (ILPPPPPPPPPPPPPPPVIPHPA) shows a compositional bias: pro residues. Positions 1602-1623 (SNLSRTKSSDTSSTSPLNSSAS) are enriched in low complexity. The segment covering 1708 to 1719 (TSRDISPEKSEL) has biased composition (basic and acidic residues). Ser1713 bears the Phosphoserine mark. Residues 1724 to 1734 (PGPPGVEPPPQ) are compositionally biased toward pro residues. Positions 1768–1792 (EDCRESEIETNTELKERVKELSEGI) form a coiled coil. Phosphoserine occurs at positions 1856, 1896, 1971, 2030, 2035, 2091, 2101, 2189, 2192, and 2243. Positions 2252–2279 (DNMVPQGMPEQETTVGAIQDHTESSVHN) are disordered.

Homodimer. Heterodimer of isoform 1 and isoform 2. Isoform 1 and isoform 2 interact with AR. Expressed in endocrine tissue.

It localises to the nucleus. Functionally, acts as a transcriptional corepressor for AR-mediated transactivation function. May act as a transcriptional regulator during spermatogenesis and, in particular, during meiotic division. In terms of biological role, acts as a transcriptional coactivator for AR-mediated transactivation function. May act as a transcriptional regulator during spermatogenesis and, in particular, during meiotic division. This Homo sapiens (Human) protein is Zinc finger protein 318 (ZNF318).